The sequence spans 177 residues: Peptidyl-prolyl cis-trans isomerase H (177 aa).

A2 is modified (N-acetylalanine). In terms of domain architecture, PPIase cyclophilin-type spans 14 to 176 (FFDVSIGGQE…LPVVISQCGE (163 aa)).

The protein belongs to the cyclophilin-type PPIase family. PPIase H subfamily. As to quaternary structure, interacts directly with PRPF4. Part of a heteromeric complex containing PPIH, PRPF3 and PRPF4 that is stable in the absence of RNA. Component of the U4/U6-U5 tri-snRNP complex composed of the U4, U6 and U5 snRNAs and at least PRPF3, PRPF4, PRPF6, PRPF8, PRPF31, SNRNP200, TXNL4A, SNRNP40, DDX23, CD2BP2, PPIH, SNU13, EFTUD2, SART1 and USP39. Heterodimer with PRPF18.

It localises to the nucleus speckle. The protein localises to the cytoplasm. The catalysed reaction is [protein]-peptidylproline (omega=180) = [protein]-peptidylproline (omega=0). With respect to regulation, inhibited by cyclosporin A. In terms of biological role, PPIase that catalyzes the cis-trans isomerization of proline imidic peptide bonds in oligopeptides and may therefore assist protein folding. Participates in pre-mRNA splicing. May play a role in the assembly of the U4/U5/U6 tri-snRNP complex, one of the building blocks of the spliceosome. May act as a chaperone. This chain is Peptidyl-prolyl cis-trans isomerase H (PPIH), found in Homo sapiens (Human).